Reading from the N-terminus, the 136-residue chain is Large ribosomal subunit protein uL16 (136 aa).

The protein belongs to the universal ribosomal protein uL16 family. In terms of assembly, part of the 50S ribosomal subunit.

Functionally, binds 23S rRNA and is also seen to make contacts with the A and possibly P site tRNAs. The protein is Large ribosomal subunit protein uL16 of Enterobacter sp. (strain 638).